Reading from the N-terminus, the 123-residue chain is Small ribosomal subunit protein uS13 (123 aa).

A disordered region spans residues 92–123; that stretch reads RKGLPVRGQKTKTNARTRKGPKKLVGAKKKSK.

Belongs to the universal ribosomal protein uS13 family. Part of the 30S ribosomal subunit. Forms a loose heterodimer with protein S19. Forms two bridges to the 50S subunit in the 70S ribosome.

Functionally, located at the top of the head of the 30S subunit, it contacts several helices of the 16S rRNA. In the 70S ribosome it contacts the 23S rRNA (bridge B1a) and protein L5 of the 50S subunit (bridge B1b), connecting the 2 subunits; these bridges are implicated in subunit movement. Contacts the tRNAs in the A and P-sites. The sequence is that of Small ribosomal subunit protein uS13 from Clostridium kluyveri (strain NBRC 12016).